Consider the following 276-residue polypeptide: MLSIRTVLGPLATILLTVLGPFGAHGSGLADKVIWAVNAGGESHVDVHGIHYRKDPLEGRVGRASDYGMKLPILRSNPEDQVLYQTERYNEDSFGYDIPIKEEGEYVLVLKFAEVYFAQSQQKVFDVRVNGHTVVKDLDIFDRVGHSTAHDEIIPISIKKGKLSVQGEVSTFTGKLSVEFVKGYYDNPKVCALFIMKGTADDVPMLQPHPGLEKKEEEEEEEEEEGSTSKKQINKNRVQSGPRTPNPYASDNSSLMFPILVAFGVFIPTLFCLCRL.

Positions 1–26 (MLSIRTVLGPLATILLTVLGPFGAHG) are cleaved as a signal peptide. Over 27–253 (SGLADKVIWA…TPNPYASDNS (227 aa)) the chain is Lumenal. A carbohydrate is bound by residues tyrosine 67, tyrosine 89, tyrosine 116, phenylalanine 117, and aspartate 186. Residues 204-247 (PMLQPHPGLEKKEEEEEEEEEEGSTSKKQINKNRVQSGPRTPNP) form a disordered region. Residues 216–226 (EEEEEEEEEEG) show a composition bias toward acidic residues. Over residues 229 to 247 (SKKQINKNRVQSGPRTPNP) the composition is skewed to polar residues. Residue asparagine 252 is glycosylated (N-linked (GlcNAc...) asparagine). A helical transmembrane segment spans residues 254-274 (SLMFPILVAFGVFIPTLFCLC). At 275–276 (RL) the chain is on the cytoplasmic side.

Belongs to the malectin family. In terms of tissue distribution, widely expressed throughout development including the anterior neuroectoderm and neural crest at stages 18 and 20, and the retina, hatching gland, otic vesicle, epibranchial placodes, pronephros and tail tip of later states. At stage 41, expressed in the liver, pancreas, branchial arches and proctodeum. Expressed broadly in adults in fat, intestine, gall bladder, eye, muscle, kidney, stomach, liver, heart, pancreas and lung.

The protein localises to the endoplasmic reticulum membrane. Functionally, carbohydrate-binding protein with a strong ligand preference for Glc2-N-glycan. May play a role in the early steps of protein N-glycosylation. Can bind di- or higher oligomers but not monomers of glucose, including maltose, maltotriose, maltotetraose, maltoheptaose, nigerose, kojibose, cellobiose and isomaltose, although based on their subcellular locations, these are unlikely to all be physiological ligands. The protein is Malectin-A of Xenopus laevis (African clawed frog).